Reading from the N-terminus, the 454-residue chain is Bifunctional protein GlmU (454 aa).

The interval 1–225 (MNIVILAAGM…IWETLGVNSK (225 aa)) is pyrophosphorylase. Residues 6 to 9 (LAAG), K20, Q71, 76 to 77 (GT), 98 to 100 (YGD), G135, E150, N165, and N223 each bind UDP-N-acetyl-alpha-D-glucosamine. D100 contacts Mg(2+). N223 lines the Mg(2+) pocket. Residues 226–246 (LQLAEVERIHQGNQARRLLEA) are linker. The tract at residues 247–454 (GVTLLDPARI…WQRPVKQPKK (208 aa)) is N-acetyltransferase. Residues R329 and K347 each coordinate UDP-N-acetyl-alpha-D-glucosamine. The active-site Proton acceptor is H359. UDP-N-acetyl-alpha-D-glucosamine-binding residues include Y362 and N373. Acetyl-CoA contacts are provided by residues A376, 382–383 (NY), S401, A419, and R436.

It in the N-terminal section; belongs to the N-acetylglucosamine-1-phosphate uridyltransferase family. The protein in the C-terminal section; belongs to the transferase hexapeptide repeat family. As to quaternary structure, homotrimer. It depends on Mg(2+) as a cofactor.

It is found in the cytoplasm. The enzyme catalyses alpha-D-glucosamine 1-phosphate + acetyl-CoA = N-acetyl-alpha-D-glucosamine 1-phosphate + CoA + H(+). It carries out the reaction N-acetyl-alpha-D-glucosamine 1-phosphate + UTP + H(+) = UDP-N-acetyl-alpha-D-glucosamine + diphosphate. It functions in the pathway nucleotide-sugar biosynthesis; UDP-N-acetyl-alpha-D-glucosamine biosynthesis; N-acetyl-alpha-D-glucosamine 1-phosphate from alpha-D-glucosamine 6-phosphate (route II): step 2/2. The protein operates within nucleotide-sugar biosynthesis; UDP-N-acetyl-alpha-D-glucosamine biosynthesis; UDP-N-acetyl-alpha-D-glucosamine from N-acetyl-alpha-D-glucosamine 1-phosphate: step 1/1. It participates in bacterial outer membrane biogenesis; LPS lipid A biosynthesis. Catalyzes the last two sequential reactions in the de novo biosynthetic pathway for UDP-N-acetylglucosamine (UDP-GlcNAc). The C-terminal domain catalyzes the transfer of acetyl group from acetyl coenzyme A to glucosamine-1-phosphate (GlcN-1-P) to produce N-acetylglucosamine-1-phosphate (GlcNAc-1-P), which is converted into UDP-GlcNAc by the transfer of uridine 5-monophosphate (from uridine 5-triphosphate), a reaction catalyzed by the N-terminal domain. In Cupriavidus necator (strain ATCC 17699 / DSM 428 / KCTC 22496 / NCIMB 10442 / H16 / Stanier 337) (Ralstonia eutropha), this protein is Bifunctional protein GlmU.